Here is a 246-residue protein sequence, read N- to C-terminus: Bacteriorhodopsin-II-like protein (246 aa).

Transmembrane regions (helical) follow at residues 7–27, 45–65, 82–102, 107–127, 135–155, 182–202, and 205–225; these read EATWLWIGTIGMVLGTVYFAV, TLIPAIAAAAYLAMATGLGVI, YADWLLTTPLLIIDLALVAGA, LYKLIIIDAIMILGGLAGSMM, IVWWAVSTAAFIILLYYLLGE, WALYPIVWILGTGGGFGIIAV, and EIMLYVMLDIGTKIGFGAVLL. K217 carries the N6-(retinylidene)lysine modification.

This sequence belongs to the archaeal/bacterial/fungal opsin family. Post-translationally, the covalent binding of retinal to the apoprotein, bacterioopsin, generates bacteriorhodopsin.

The protein localises to the cell membrane. Has no proton-pumping activity but is potentially capable of functioning as a sensory SRII-like protein. The chromophore contains 36.5% all-trans-, 7.6% 11-cis- and 56.4% 13-cis-retinal in the dark and 30.1% 11-cis- and 47.7% 13-cis-retinal upon illumination with &gt;460 nm light. In Haloquadratum walsbyi (strain DSM 16790 / HBSQ001), this protein is Bacteriorhodopsin-II-like protein (bop2).